The following is a 270-amino-acid chain: UPF0354 protein BT9727_4425 (270 aa).

This sequence belongs to the UPF0354 family.

This chain is UPF0354 protein BT9727_4425, found in Bacillus thuringiensis subsp. konkukian (strain 97-27).